The chain runs to 169 residues: Allophycocyanin subunit beta-18 (169 aa).

N4-methylasparagine is present on N72. Position 82 (C82) interacts with (2R,3E)-phycocyanobilin.

The protein belongs to the phycobiliprotein family. As to quaternary structure, heterodimer of an alpha and a beta chain. Contains one covalently linked bilin chromophore.

The protein localises to the plastid. The protein resides in the chloroplast thylakoid membrane. In terms of biological role, light-harvesting photosynthetic bile pigment-protein from the phycobiliprotein complex. Allophycocyanin has a maximum absorption at approximately 650 nanometers. The protein is Allophycocyanin subunit beta-18 (apcF) of Porphyra purpurea (Red seaweed).